Consider the following 3131-residue polypeptide: Intermembrane lipid transfer protein vps1302 (3131 aa).

In terms of domain architecture, Chorein N-terminal spans 2-115 (LEGLLANFLN…VLESKRRQMQ (114 aa)). Basic and acidic residues predominate over residues 774–801 (DGKASDDDDNGDWRPESSESLDSHESEY). The disordered stretch occupies residues 774-807 (DGKASDDDDNGDWRPESSESLDSHESEYKLNNTP). The region spanning 2085–2363 (KVMIYPPYVI…NYSWDFPILK (279 aa)) is the SHR-BD domain.

The protein belongs to the VPS13 family.

The protein localises to the golgi apparatus. The protein resides in the trans-Golgi network. In terms of biological role, mediates the transfer of lipids between membranes at organelle contact sites. May play a role in mitochondrial lipid homeostasis, Golgi vesicle transport, reticulophagy, actin cytoskeleton organization and formation of the forespore membrane. This Schizosaccharomyces pombe (strain 972 / ATCC 24843) (Fission yeast) protein is Intermembrane lipid transfer protein vps1302.